Reading from the N-terminus, the 182-residue chain is MKEQEIQSSMNKSVEATQRNFNTIRTGRANASLLDRISVEYYGAETPIKSLASIATVDSQTISIQPFDISCLQAIEKAISMSDLGITPNNDGKVIRINVPPLTEERRKEFCKLASKYAEEGKVALRNIRRDAVDKEKKDEKEGLISIDESRDNQLEIQKFTDKYISLIETKLSEKEKEILKV.

It belongs to the RRF family.

The protein resides in the cytoplasm. Its function is as follows. Responsible for the release of ribosomes from messenger RNA at the termination of protein biosynthesis. May increase the efficiency of translation by recycling ribosomes from one round of translation to another. The polypeptide is Ribosome-recycling factor (Prochlorococcus marinus (strain MIT 9515)).